We begin with the raw amino-acid sequence, 574 residues long: Serine carboxypeptidase ctsa-3.1 (574 aa).

The first 19 residues, 1 to 19 (MCRTLLGVAFLVVTVLSQG), serve as a signal peptide directing secretion. N-linked (GlcNAc...) asparagine glycans are attached at residues N48 and N163. The active site involves S172. N241, N408, N414, and N426 each carry an N-linked (GlcNAc...) asparagine glycan. Residues D441 and H507 contribute to the active site. N534 carries an N-linked (GlcNAc...) asparagine glycan.

This sequence belongs to the peptidase S10 family.

The sequence is that of Serine carboxypeptidase ctsa-3.1 from Caenorhabditis elegans.